The sequence spans 1325 residues: ATP-binding cassette sub-family C member 4 (1325 aa).

Residues 92-377 (YLVLGIFTLI…FFPSAIERVS (286 aa)) form the ABC transmembrane type-1 1 domain. 7 helical membrane passes run 93–113 (LVLG…PIFL), 136–156 (AYAT…HLYF), 207–227 (QVTV…AVTA), 228–248 (LLWM…IILL), 328–348 (SKII…VITA), 351–371 (VFVA…FFPS), and 440–460 (LLAV…AVLG). The 224-residue stretch at 410–633 (VHVQDFTAFW…GIDFGSLLKK (224 aa)) folds into the ABC transporter 1 domain. Residue 445 to 452 (GPVGAGKS) participates in ATP binding. A phosphothreonine mark is found at T646 and T648. Positions 657–667 (SSVWSQQSSRP) are enriched in low complexity. Residues 657-688 (SSVWSQQSSRPSLKDGALESQDTENVPVTLSE) form a disordered region. Phosphoserine occurs at positions 664 and 668. A helical transmembrane segment spans residues 710 to 730 (HWIVFIFLILLNTAAQVAYVL). Residues 714-1005 (FIFLILLNTA…CVRQSAEVEN (292 aa)) form the ABC transmembrane type-1 2 domain. Residues N746 and N754 are each glycosylated (N-linked (GlcNAc...) asparagine). 6 helical membrane passes run 771–791 (LTVA…YVLV), 836–856 (LPLT…VVSV), 858–878 (VAVI…FIFL), 954–974 (AICA…AKTL), 977–997 (GQVG…QWCV), and 1038–1058 (EGVI…PLVL). The 234-residue stretch at 1041–1274 (IIFDNVNFMY…KESLFYKMVQ (234 aa)) folds into the ABC transporter 2 domain. 1075 to 1082 (GRTGAGKS) contributes to the ATP binding site. Positions 1322–1325 (ETAL) match the PDZ-binding motif.

The protein belongs to the ABC transporter superfamily. ABCC family. Conjugate transporter (TC 3.A.1.208) subfamily. In terms of assembly, interacts (via PDZ-binding motif) with SNX27 (via PDZ domain); this interaction accelerates MRP4 internalization. Mg(2+) is required as a cofactor. In terms of processing, N-glycosylated; leading to substrate-selective effects on its transport activity. In terms of tissue distribution, widely expressed, with particularly high levels in prostate, but is barely detectable in liver. sinusoidal membrane of hepatocytes.

It is found in the basolateral cell membrane. The protein resides in the apical cell membrane. The enzyme catalyses ATP + H2O + xenobioticSide 1 = ADP + phosphate + xenobioticSide 2.. It catalyses the reaction an S-substituted glutathione(in) + ATP + H2O = an S-substituted glutathione(out) + ADP + phosphate + H(+). It carries out the reaction 17beta-estradiol 17-O-(beta-D-glucuronate)(in) + ATP + H2O = 17beta-estradiol 17-O-(beta-D-glucuronate)(out) + ADP + phosphate + H(+). The catalysed reaction is dehydroepiandrosterone 3-sulfate(in) + ATP + H2O = dehydroepiandrosterone 3-sulfate(out) + ADP + phosphate + H(+). The enzyme catalyses leukotriene C4(in) + ATP + H2O = leukotriene C4(out) + ADP + phosphate + H(+). It catalyses the reaction leukotriene B4(in) + ATP + H2O = leukotriene B4(out) + ADP + phosphate + H(+). It carries out the reaction urate(in) + ATP + H2O = urate(out) + ADP + phosphate + H(+). The catalysed reaction is 3',5'-cyclic GMP(in) + ATP + H2O = 3',5'-cyclic GMP(out) + ADP + phosphate + H(+). The enzyme catalyses 3',5'-cyclic AMP(in) + ATP + H2O = 3',5'-cyclic AMP(out) + ADP + phosphate + H(+). It catalyses the reaction prostaglandin E2(in) + ATP + H2O = prostaglandin E2(out) + ADP + phosphate + H(+). It carries out the reaction prostaglandin E1(in) + ATP + H2O = prostaglandin E1(out) + ADP + phosphate + H(+). The catalysed reaction is glycodeoxycholate(in) + glutathione(in) + ATP + H2O = glycodeoxycholate(out) + glutathione(out) + ADP + phosphate + H(+). The enzyme catalyses cholate(in) + glutathione(in) + ATP + H2O = cholate(out) + glutathione(out) + ADP + phosphate + H(+). It catalyses the reaction glycocholate(in) + glutathione(in) + ATP + H2O = glycocholate(out) + glutathione(out) + ADP + phosphate + H(+). It carries out the reaction taurocholate(in) + glutathione(in) + ATP + H2O = taurocholate(out) + glutathione(out) + ADP + phosphate + H(+). The catalysed reaction is glycochenodeoxycholate(in) + glutathione(in) + ATP + H2O = glycochenodeoxycholate(out) + glutathione(out) + ADP + phosphate + H(+). The enzyme catalyses taurochenodeoxycholate(in) + glutathione(in) + ATP + H2O = taurochenodeoxycholate(out) + glutathione(out) + ADP + phosphate + H(+). It catalyses the reaction glycoursodeoxycholate(in) + glutathione(in) + ATP + H2O = glycoursodeoxycholate(out) + glutathione(out) + ADP + phosphate + H(+). It carries out the reaction tauroursodeoxycholate(in) + glutathione(in) + ATP + H2O = tauroursodeoxycholate(out) + glutathione(out) + ADP + phosphate + H(+). With respect to regulation, GSH stimulates the transport of MRP4. Urate inhibits methotrexate transport but stimulates cGMP transport. Nonsteroidal anti-inflammatory drugs (NSAIDs) strongly suppress the transport of MRP4 substrates. Functionally, ATP-dependent transporter of the ATP-binding cassette (ABC) family that actively extrudes physiological compounds and xenobiotics from cells. Transports a range of endogenous molecules that have a key role in cellular communication and signaling, including cyclic nucleotides such as cyclic AMP (cAMP) and cyclic GMP (cGMP), bile acids, steroid conjugates, urate, and prostaglandins. Mediates the ATP-dependent efflux of glutathione conjugates such as leukotriene C4 (LTC4) and leukotriene B4 (LTB4) too. The presence of GSH is necessary for the ATP-dependent transport of LTB4, whereas GSH is not required for the transport of LTC4. Mediates the cotransport of bile acids with reduced glutathione (GSH). Transports a wide range of drugs and their metabolites, including anticancer, antiviral and antibiotics molecules. Confers resistance to anticancer agents such as methotrexate. The protein is ATP-binding cassette sub-family C member 4 (ABCC4) of Homo sapiens (Human).